The following is a 180-amino-acid chain: Large ribosomal subunit protein uL6 (180 aa).

It belongs to the universal ribosomal protein uL6 family. In terms of assembly, part of the 50S ribosomal subunit.

Its function is as follows. This protein binds to the 23S rRNA, and is important in its secondary structure. It is located near the subunit interface in the base of the L7/L12 stalk, and near the tRNA binding site of the peptidyltransferase center. The sequence is that of Large ribosomal subunit protein uL6 from Anaeromyxobacter sp. (strain K).